A 131-amino-acid polypeptide reads, in one-letter code: Small ribosomal subunit protein uS8 (131 aa).

Belongs to the universal ribosomal protein uS8 family. As to quaternary structure, part of the 30S ribosomal subunit. Contacts proteins S5 and S12.

Its function is as follows. One of the primary rRNA binding proteins, it binds directly to 16S rRNA central domain where it helps coordinate assembly of the platform of the 30S subunit. This is Small ribosomal subunit protein uS8 from Novosphingobium aromaticivorans (strain ATCC 700278 / DSM 12444 / CCUG 56034 / CIP 105152 / NBRC 16084 / F199).